The primary structure comprises 316 residues: N-acetyl-gamma-glutamyl-phosphate reductase (316 aa).

Cys136 is an active-site residue.

It belongs to the NAGSA dehydrogenase family. Type 1 subfamily.

Its subcellular location is the cytoplasm. It catalyses the reaction N-acetyl-L-glutamate 5-semialdehyde + phosphate + NADP(+) = N-acetyl-L-glutamyl 5-phosphate + NADPH + H(+). It participates in amino-acid biosynthesis; L-arginine biosynthesis; N(2)-acetyl-L-ornithine from L-glutamate: step 3/4. Its function is as follows. Catalyzes the NADPH-dependent reduction of N-acetyl-5-glutamyl phosphate to yield N-acetyl-L-glutamate 5-semialdehyde. This Xanthomonas campestris pv. campestris (strain ATCC 33913 / DSM 3586 / NCPPB 528 / LMG 568 / P 25) protein is N-acetyl-gamma-glutamyl-phosphate reductase.